The chain runs to 134 residues: Large ribosomal subunit protein uL16c (134 aa).

Belongs to the universal ribosomal protein uL16 family. In terms of assembly, part of the 50S ribosomal subunit.

It localises to the plastid. The protein localises to the chloroplast. The polypeptide is Large ribosomal subunit protein uL16c (Nephroselmis olivacea (Green alga)).